The chain runs to 622 residues: Mitochondrial distribution and morphology protein 34 (622 aa).

Positions 1-204 constitute an SMP-LTD domain; it reads MSFKVNWNSL…LPTLIHQLSL (204 aa). Disordered stretches follow at residues 362–399 and 568–592; these read YSNK…PSEL and FDGG…TRNE. Positions 370–384 are enriched in basic residues; it reads KPKRRRIKVHKKNKS. Residues 390–399 are compositionally biased toward polar residues; that stretch reads TTTTSKPSEL. Residues 571–583 show a composition bias toward low complexity; that stretch reads GKNNNTNDNNSKN.

Belongs to the MDM34 family. As to quaternary structure, component of the ER-mitochondria encounter structure (ERMES) or MDM complex, composed of MMM1, MDM10, MDM12 and MDM34.

The protein resides in the mitochondrion outer membrane. Functionally, component of the ERMES/MDM complex, which serves as a molecular tether to connect the endoplasmic reticulum (ER) and mitochondria. Components of this complex are involved in the control of mitochondrial shape and protein biogenesis, and function in nonvesicular lipid trafficking between the ER and mitochondria. MDM34 is required for the interaction of the ER-resident membrane protein MMM1 and the outer mitochondrial membrane-resident beta-barrel protein MDM10. The sequence is that of Mitochondrial distribution and morphology protein 34 from Candida dubliniensis (strain CD36 / ATCC MYA-646 / CBS 7987 / NCPF 3949 / NRRL Y-17841) (Yeast).